The following is a 715-amino-acid chain: Harpin secretion protein HrpI (715 aa).

A run of 7 helical transmembrane segments spans residues 23–43 (GAAI…TGLI), 45–65 (VLIA…MYLP), 69–89 (AFST…ALSI), 115–135 (GNLA…FLVI), 203–223 (AIAG…IGVL), 241–261 (IGDG…AGMI), and 298–318 (MLGF…ISAI).

This sequence belongs to the FHIPEP (flagella/HR/invasion proteins export pore) family.

Its subcellular location is the cell inner membrane. Functionally, involved in the secretion of harpin; a proteinaceous elicitor of the hypersensitivity response in plants. This is Harpin secretion protein HrpI (hrpI) from Erwinia amylovora (Fire blight bacteria).